We begin with the raw amino-acid sequence, 407 residues long: Aminomethyltransferase, mitochondrial (407 aa).

The transit peptide at 1–29 directs the protein to the mitochondrion; the sequence is MRGGLWQLGQSITRRLGQSDKKTIARRCY. Glutamate 234, arginine 265, and tyrosine 403 together coordinate substrate.

The protein belongs to the GcvT family. The glycine cleavage system is composed of four proteins: P, T, L and H.

Its subcellular location is the mitochondrion. The enzyme catalyses N(6)-[(R)-S(8)-aminomethyldihydrolipoyl]-L-lysyl-[protein] + (6S)-5,6,7,8-tetrahydrofolate = N(6)-[(R)-dihydrolipoyl]-L-lysyl-[protein] + (6R)-5,10-methylene-5,6,7,8-tetrahydrofolate + NH4(+). Its function is as follows. The glycine cleavage system catalyzes the degradation of glycine. The sequence is that of Aminomethyltransferase, mitochondrial (GDCST) from Flaveria pringlei.